The primary structure comprises 314 residues: Peroxidase 2 (314 aa).

A signal peptide spans 1 to 23; sequence MASASSVSLMLLVAAAMASAASA. Residue Q24 is modified to Pyrrolidone carboxylic acid. Disulfide bonds link C34-C109, C67-C72, C115-C310, and C194-C219. Catalysis depends on H65, which acts as the Proton acceptor. Ca(2+) contacts are provided by D66, V69, G71, D73, and S75. N148 carries an N-linked (GlcNAc...) asparagine glycan. P157 serves as a coordination point for substrate. A glycan (N-linked (GlcNAc...) asparagine) is linked at N169. H187 contacts heme b. T188 serves as a coordination point for Ca(2+). N203 is a glycosylation site (N-linked (GlcNAc...) asparagine). Ca(2+)-binding residues include D234, T237, and D242. Residues N274 and N309 are each glycosylated (N-linked (GlcNAc...) asparagine).

It belongs to the peroxidase family. Classical plant (class III) peroxidase subfamily. It depends on Ca(2+) as a cofactor. Requires heme b as cofactor.

It is found in the secreted. It catalyses the reaction 2 a phenolic donor + H2O2 = 2 a phenolic radical donor + 2 H2O. Its function is as follows. Removal of H(2)O(2), oxidation of toxic reductants, biosynthesis and degradation of lignin, suberization, auxin catabolism, response to environmental stresses such as wounding, pathogen attack and oxidative stress. These functions might be dependent on each isozyme/isoform in each plant tissue. The sequence is that of Peroxidase 2 (PRX112) from Oryza sativa subsp. indica (Rice).